Reading from the N-terminus, the 360-residue chain is Cyclin-Y-like protein 2 (360 aa).

The region spanning 204-286 (RLTAEFAIVS…FLKLINYNIG (83 aa)) is the Cyclin N-terminal domain.

The protein belongs to the cyclin family. Cyclin Y subfamily.

The sequence is that of Cyclin-Y-like protein 2 (CCNYL2) from Macaca fascicularis (Crab-eating macaque).